Here is a 184-residue protein sequence, read N- to C-terminus: ATP synthase subunit b, chloroplastic (184 aa).

A helical transmembrane segment spans residues 27–49 (LATNPINLSVVLGVLIFFGKGVL).

This sequence belongs to the ATPase B chain family. In terms of assembly, F-type ATPases have 2 components, F(1) - the catalytic core - and F(0) - the membrane proton channel. F(1) has five subunits: alpha(3), beta(3), gamma(1), delta(1), epsilon(1). F(0) has four main subunits: a(1), b(1), b'(1) and c(10-14). The alpha and beta chains form an alternating ring which encloses part of the gamma chain. F(1) is attached to F(0) by a central stalk formed by the gamma and epsilon chains, while a peripheral stalk is formed by the delta, b and b' chains.

Its subcellular location is the plastid. It is found in the chloroplast thylakoid membrane. Its function is as follows. F(1)F(0) ATP synthase produces ATP from ADP in the presence of a proton or sodium gradient. F-type ATPases consist of two structural domains, F(1) containing the extramembraneous catalytic core and F(0) containing the membrane proton channel, linked together by a central stalk and a peripheral stalk. During catalysis, ATP synthesis in the catalytic domain of F(1) is coupled via a rotary mechanism of the central stalk subunits to proton translocation. Functionally, component of the F(0) channel, it forms part of the peripheral stalk, linking F(1) to F(0). The polypeptide is ATP synthase subunit b, chloroplastic (Chloranthus spicatus (Chulantree)).